We begin with the raw amino-acid sequence, 249 residues long: Segregation and condensation protein A (249 aa).

It belongs to the ScpA family. Component of a cohesin-like complex composed of ScpA, ScpB and the Smc homodimer, in which ScpA and ScpB bind to the head domain of Smc. The presence of the three proteins is required for the association of the complex with DNA.

The protein localises to the cytoplasm. In terms of biological role, participates in chromosomal partition during cell division. May act via the formation of a condensin-like complex containing Smc and ScpB that pull DNA away from mid-cell into both cell halves. In Clostridium acetobutylicum (strain ATCC 824 / DSM 792 / JCM 1419 / IAM 19013 / LMG 5710 / NBRC 13948 / NRRL B-527 / VKM B-1787 / 2291 / W), this protein is Segregation and condensation protein A.